Here is a 130-residue protein sequence, read N- to C-terminus: Small ribosomal subunit protein uS11 (130 aa).

The tract at residues 109 to 130 (EDVTPIPHDGTGRPGGKRGRRV) is disordered.

It belongs to the universal ribosomal protein uS11 family. Part of the 30S ribosomal subunit.

In terms of biological role, located on the platform of the 30S subunit. This chain is Small ribosomal subunit protein uS11, found in Methanosphaera stadtmanae (strain ATCC 43021 / DSM 3091 / JCM 11832 / MCB-3).